We begin with the raw amino-acid sequence, 379 residues long: UDP-N-acetylglucosamine--N-acetylmuramyl-(pentapeptide) pyrophosphoryl-undecaprenol N-acetylglucosamine transferase (379 aa).

UDP-N-acetyl-alpha-D-glucosamine contacts are provided by residues 10-12, Asn124, and Arg165; that span reads TGG. Positions 174 to 195 are disordered; sequence TRDQGPGIRDQEKHMTDSTGPA. Residues Ser211, Ile266, and Gln311 each contribute to the UDP-N-acetyl-alpha-D-glucosamine site.

It belongs to the glycosyltransferase 28 family. MurG subfamily.

It is found in the cell inner membrane. The catalysed reaction is di-trans,octa-cis-undecaprenyl diphospho-N-acetyl-alpha-D-muramoyl-L-alanyl-D-glutamyl-meso-2,6-diaminopimeloyl-D-alanyl-D-alanine + UDP-N-acetyl-alpha-D-glucosamine = di-trans,octa-cis-undecaprenyl diphospho-[N-acetyl-alpha-D-glucosaminyl-(1-&gt;4)]-N-acetyl-alpha-D-muramoyl-L-alanyl-D-glutamyl-meso-2,6-diaminopimeloyl-D-alanyl-D-alanine + UDP + H(+). Its pathway is cell wall biogenesis; peptidoglycan biosynthesis. Functionally, cell wall formation. Catalyzes the transfer of a GlcNAc subunit on undecaprenyl-pyrophosphoryl-MurNAc-pentapeptide (lipid intermediate I) to form undecaprenyl-pyrophosphoryl-MurNAc-(pentapeptide)GlcNAc (lipid intermediate II). The chain is UDP-N-acetylglucosamine--N-acetylmuramyl-(pentapeptide) pyrophosphoryl-undecaprenol N-acetylglucosamine transferase from Pelobacter propionicus (strain DSM 2379 / NBRC 103807 / OttBd1).